The chain runs to 943 residues: TBC1 domain family member 2B (943 aa).

Residues 1-29 (MPGVEDPCDSQGTPPEEPSTSVAPGEAAK) form a disordered region. The span at 10 to 22 (SQGTPPEEPSTSV) shows a compositional bias: polar residues. Residues 32–129 (SPRLCGYLAK…WLQELQQKRW (98 aa)) enclose the PH domain. The stretch at 315–514 (RMESDVLLKL…ARYSNLEAKM (200 aa)) forms a coiled coil. The Rab-GAP TBC domain occupies 642–836 (GIPHEHRSRM…RIWDSLLYEG (195 aa)).

It is found in the early endosome. GTPase-activating protein that plays a role in the early steps of endocytosis. This chain is TBC1 domain family member 2B (tbc1d2b), found in Xenopus tropicalis (Western clawed frog).